The primary structure comprises 468 residues: Lysosomal dipeptide transporter MFSD1 (468 aa).

A disordered region spans residues 1–25 (MEDEEEEARALLPGGSDEAGRETRA). The Dileucine internalization motif motif lies at 11-12 (LL). 12 helical membrane-spanning segments follow: residues 42-62 (LAHR…SYFC), 86-106 (LLYA…GFLI), 116-136 (TIIF…GGIF), 138-158 (AFWL…SLAV), 173-194 (LNLV…NMNL), 218-238 (LMIG…LAYL), 270-290 (WLIF…IGLV), 307-327 (AINS…GLLV), 334-354 (IIWV…LAFT), 364-384 (LLGL…AFVV), 395-415 (FMQS…GMIL), and 421-441 (LFLE…VVLL).

Belongs to the major facilitator superfamily. In terms of assembly, homodimer. Interacts with lysosomal protein GLMP (via lumenal domain); the interaction starts while both proteins are still in the endoplasmic reticulum and is required for stabilization of MFSD1 in lysosomes but has no direct effect on its targeting to lysosomes or transporter activity.

It localises to the lysosome membrane. The enzyme catalyses L-alpha-aminoacyl-L-arginine(out) = L-alpha-aminoacyl-L-arginine(in). It carries out the reaction L-arginyl-L-alpha-amino acid(out) = L-arginyl-L-alpha-amino acid(in). The catalysed reaction is L-arginyl-glycine(out) = L-arginyl-glycine(in). It catalyses the reaction L-alpha-aminoacyl-L-lysine(out) = L-alpha-aminoacyl-L-lysine(in). The enzyme catalyses L-aspartyl-L-lysine(out) = L-aspartyl-L-lysine(in). It carries out the reaction L-alanyl-L-lysine(out) = L-alanyl-L-lysine(in). The catalysed reaction is L-lysyl-L-alpha-amino acid(out) = L-lysyl-L-alpha-amino acid(in). It catalyses the reaction L-lysyl-L-alanine(out) = L-lysyl-L-alanine(in). The enzyme catalyses L-lysyl-L-lysine(out) = L-lysyl-L-lysine(in). It carries out the reaction L-lysyl-glycine(out) = L-lysyl-glycine(in). The catalysed reaction is L-alpha-aminoacyl-L-histidine(out) = L-alpha-aminoacyl-L-histidine(in). It catalyses the reaction L-histidyl-L-alpha-amino acid(out) = L-histidyl-L-alpha-amino acid(in). The enzyme catalyses L-histidyl-glycine(out) = L-histidyl-glycine(in). Its function is as follows. Lysosomal dipeptide uniporter that selectively exports lysine, arginine or histidine-containing dipeptides with a net positive charge from the lysosome lumen into the cytosol. Could play a role in a specific type of protein O-glycosylation indirectly regulating macrophages migration and tissue invasion. Also essential for liver homeostasis. The polypeptide is Lysosomal dipeptide transporter MFSD1 (Bos taurus (Bovine)).